Reading from the N-terminus, the 334-residue chain is tRNA uridine(34) hydroxylase (334 aa).

One can recognise a Rhodanese domain in the interval 123 to 217 (SDPDVILVDT…YLEEVKAEES (95 aa)). Cysteine 177 acts as the Cysteine persulfide intermediate in catalysis.

The protein belongs to the TrhO family.

The catalysed reaction is uridine(34) in tRNA + AH2 + O2 = 5-hydroxyuridine(34) in tRNA + A + H2O. Catalyzes oxygen-dependent 5-hydroxyuridine (ho5U) modification at position 34 in tRNAs. The protein is tRNA uridine(34) hydroxylase of Shewanella baltica (strain OS195).